The primary structure comprises 3411 residues: MSGRKAQGKTLGVNMVRRGVRSLSNKIKQKTKQIGNRPGPSRGVQGFIFFFLFNILTGKKITAHLKRLWKMLDPRQGLAVLRKVKRVVASLMRGLSSRKRRSHDALAVQFLILGMLLMAGGVTLVRKNRWLLLNVTSEDLGKTFSVGAGNCTTNILEAKYWCPDSMEYNCPNLSPREEPDDIDCWCYGVENVRVAYGKCDSAGRSRRSRRAIDLPTHENHGLKTRQEKWMTGRMGERQLQKIERWLVRNPFFAVTALTIAYLVGSNMTQRVVIALLVLAVGPAYSAHCIGITDRDFIEGVHGGTWVSATLEQDKCVTVMAPDKPSLDISLETVAIDGPAEARKVCYNAVLTHVKINDKCPSTGEAHLAEENEGDNACKRTYSDRGWGNGCGLFGKGSIVACAKFTCAKSMSLFEVDQTKIQYVIRAQLHVGAKQENWNTDIKTLKFDALSGSQEAEFTGYGKATLECQVQTAVDFGNSYIAEMEKESWIVDRQWAQDLTLPWQSGSGGVWREMHHLVEFEPPHAATIRVLALGNQEGSLKTALTGAMRVTKDTNDNNLYKLHGGHVSCRVKLSALTLKGTSYKMCTDKMSFVKNPTDTGHGTVVMQVKVPKGAPCKIPVIVADDLTAAINKGILVTVNPIASTNDDEVLIEVNPPFGDSYIIVGTGDSRLTYQWHKEGSSIGKLFTQTMKGAERLAVMGDAAWDFSSAGGFLTSVGKGIHTVFGSAFQGLFGGLSWITKVIMGAVLIWVGINTRNMTMSMSMILVGVIMMFLSLGVGADQGCAINFGKRELKCGDGIFIFRDSDDWLNKYSYYPEDPVKLASIVKASFEEGKCGLNSVDSLEHEMWRSRADEINAILEENEVDISVVVQDPKNVYQRGTHPFSRIRDGLQYGWKTWGKNLVFSPGRKNGSFIIDGKSRKECPFSNRVWNSFQIEEFGTGVFTTRVYMDAVFEYTIDCDGSILGAAVNGKKSAHGSPTFWMGSHEVNGTWMIHTLEALDYKECEWPLTHTIGTSVEESEMFMPRSIGGPVSSHNHIPGYKVQTNGPWMQVPLEVRREACPGTSVIIDGNCDGRGKSTRSTTDSGKIIPEWCCRSCTMPPVSFHGSDGCWYPMEIRPRKTHESHLVRSWVTAGEIHAVPFGLVSMMIAMEVVLRKRQGPKQMLVGGVVLLGAMLVGQVTLLDLLKLTVAVGLHFHEMNNGGDAMYMALIAAFSIRPGLLIGFGLRTLWSPRERLVLTLGAAMVEIALGGMMGGLWKYLNAVSLCILTINAVASRKASNTILPLMALLTPVTMAEVRLAAMLFCTVVIIGVLHQNSKDTSMQKTIPLVALTLTSYLGLTQPFLGLCAFLATRLFGRRSIPVNEALAAAGLVGVLAGLAFQEMENFLGPIAVGGILMMLVSVAGRVDGLELRKLGEVSWEEEAEISGSSARYDVALSEQGEFKLLSEEKVPWDQVVMTSLALVGAAIHPFALLLVLAGWLFHVKGARRSGDVLWDIPTPKIIEECEHLEDGIYGIFQSTFLGASQRGVGVAQGGVFHTMWHVTRGAFLVRNGKKLIPSWASVKEDLVAYGGSWKLEGRWDGEEEVQLIAAVPGKNVVNVQTKPSLFKVRNGGEIGAVALDYPSGTSGSPIVNRNGEVIGLYGNGILVGDNSFVSAISQTEVKEEGKEELQEIPTMLKKGMTTILDFHPGAGKTRRFLPQILAECARRRLRTLVLAPTRVVLSEMKEAFHGLDVKFHTQAFSAHGSGREVIDAMCHATLTYRMLEPTRIVNWEVIIMDEAHFLDPASIAARGWAAHRARANESATILMTATPPGTSDEFPHSNGEIEDVQTDIPSEPWNTGHDWILADKRPTAWFLPSIRAANVMAASLRKAGKSVVVLNRKTFEREYPTIKQKKPDFILATDIAEMGANLCVERVLDCRTAFKPVLVDEGRKVAIKGPLRISASSAAQRRGRIGRNPNRDGDSYYYSEPTSEDNAHHVCWLEASMLLDNMEVRGGMVAPLYGVEGTKTPVSPGEMRLRDDQRKVFRELVRNCDQPVWLSWQVAKAGLKTNDRKWCFEGPDEHEILNDSGETVKCRAPGGAKKPLRPRWCDERVSSDQSALADFIKFAEGRRGAAEVLVVLSELPDFLAKKGGEAMDTISVFLHSEEGSRAYRNALSMMPEAMTIAMLFILAGLLTSGMVIFFMSPKGISRMSMAMGTMAGCGYLMFLGGVKPTHISYIMLIFFVLMVVVIPEPGQQRSIQDNQVAYLIIGILTLVSVVAANELGMLEKTKEDLFGKKDLIPSSASPWSWPDLDLKPGAAWTVYVGIVTMLSPMLHHWIKVEYGNLSLSGIAQSASVLSFMDKGIPFMKMNISVIILLVSGWNSITVMPLLCGIGCAMLHWSLILPGIKAQQSKLAQRRVFHGVAKNPVVDGNPTVDIEEAPEMPALYEKKLALYLLLALSLASVAMCRTPFSLAEGIVLASAALGPLIEGNTSLLWNGPMAVSMTGVMRGNYYAFVGVMYNLWKMKTGRRGRANGKTLGEVWKRELNLLDKQQFELYKRTDIVEVDRDTARRHLAEGKVDTGVAVSRGTAKLRWFHERGYVKLEGRVTDLGCGRGGWCYYAAAQKEVSGVKGFTLGRDGHEKPMNVQSLGWNIITFKDKTDIHRLEPMKCDTLLCDIGESSSSSVTEGERTMRVLDTVEKWLACGVDNFCVKVLAPYMPDVLEKLELLQRRFGGTVIRNPLSRNSTHEMYYVSGARSNVTFTVNQTSRLLMRRMRRPTGKVTLEADVILPIGTRSVETDKGPLDREAIEERVERIKSEYMTTWFYDNDNPYRTWHYCGSYVTKTSGSAASMVNGVIKILTYPWDRIEEVTRMAMTDTTPFGQQRVFKEKVDTRAKDPPAGTRKIMKVVNRWLFRHLAREKNPRLCTKEEFIAKVRSHAAIGAYLEEQEQWKTANEAVQDPKFWELVDEERKLHQQGRCRTCVYNMMGKREKKLSEFGKAKGSRAIWYMWLGARYLEFEALGFLNEDHWASRENSGGGVEGIGLQYLGYVIRDLAAMDGGGFYADDTAGWDTRITEADLDDEQEILNYMSPHHKKLAQAVMEMTYKNKVVKVLRPAPGGKAYMDVISRRDQRGSGQVVTYALNTITNLKVQLIRMAEAEMVIHHQHVQDCDESALARLEAWLTEHGCDRLKRMAVSGDDCVVRPIDDRFGLALSHLNAMSKVRKDISEWQPSKGWNDWENVPFCSHHFHELHLKDGRRIVVPCREQDELIGRGRVSPGNGWMIKETACLSKAYANMWSLMYFHKRDMRLLSLAVSSAVPTSWVPQGRTTWSIHGKGEWMTTEDMLGVWNRVWITNNPHMQDKTVVKEWRDVPYLTKRQDKLCGSLIGMTNRATWASHIHLVIHRIRTLIGQEKYTDYLTVMDRYSVDADLQPGELI.

Residues 1–104 (MSGRKAQGKT…LSSRKRRSHD (104 aa)) are Cytoplasmic-facing. Positions 102 to 121 (SHDALAVQFLILGMLLMAGG) are cleaved as a propeptide — ER anchor for the capsid protein C, removed in mature form by serine protease NS3. The chain crosses the membrane as a helical span at residues 105-125 (ALAVQFLILGMLLMAGGVTLV). Topologically, residues 126 to 244 (RKNRWLLLNV…GERQLQKIER (119 aa)) are extracellular. N-linked (GlcNAc...) asparagine; by host glycosylation is found at asparagine 134 and asparagine 150. The chain crosses the membrane as a helical span at residues 245-265 (WLVRNPFFAVTALTIAYLVGS). The Cytoplasmic portion of the chain corresponds to 266–270 (NMTQR). A helical transmembrane segment spans residues 271–285 (VVIALLVLAVGPAYS). The Extracellular segment spans residues 286–730 (AHCIGITDRD…TVFGSAFQGL (445 aa)). 8 disulfides stabilise this stretch: cysteine 288–cysteine 315, cysteine 345–cysteine 401, cysteine 345–cysteine 406, cysteine 359–cysteine 390, cysteine 377–cysteine 401, cysteine 377–cysteine 406, cysteine 467–cysteine 568, and cysteine 585–cysteine 615. The fusion peptide stretch occupies residues 383–396 (DRGWGNGCGLFGKG). Residues 731 to 751 (FGGLSWITKVIMGAVLIWVGI) form a helical membrane-spanning segment. Residues 752 to 757 (NTRNMT) are Extracellular-facing. A helical membrane pass occupies residues 758 to 778 (MSMSMILVGVIMMFLSLGVGA). The Extracellular portion of the chain corresponds to 779 to 1132 (DQGCAINFGK…LVRSWVTAGE (354 aa)). 6 disulfides stabilise this stretch: cysteine 782/cysteine 793, cysteine 833/cysteine 921, cysteine 957/cysteine 1002, cysteine 1058/cysteine 1107, cysteine 1069/cysteine 1091, and cysteine 1090/cysteine 1094. Residues asparagine 908 and asparagine 986 are each glycosylated (N-linked (GlcNAc...) asparagine; by host). A helical membrane pass occupies residues 1133–1153 (IHAVPFGLVSMMIAMEVVLRK). Over 1154-1201 (RQGPKQMLVGGVVLLGAMLVGQVTLLDLLKLTVAVGLHFHEMNNGGDA) the chain is Cytoplasmic. A helical membrane pass occupies residues 1202-1222 (MYMALIAAFSIRPGLLIGFGL). Residues 1223 to 1287 (RTLWSPRERL…ILPLMALLTP (65 aa)) are Lumenal-facing. A helical transmembrane segment spans residues 1288 to 1308 (VTMAEVRLAAMLFCTVVIIGV). The Cytoplasmic segment spans residues 1309 to 1355 (LHQNSKDTSMQKTIPLVALTLTSYLGLTQPFLGLCAFLATRLFGRRS). A helical membrane pass occupies residues 1356–1376 (IPVNEALAAAGLVGVLAGLAF). At 1377-1378 (QE) the chain is on the lumenal side. Residues 1379–1399 (MENFLGPIAVGGILMMLVSVA) traverse the membrane as a helical segment. The Cytoplasmic portion of the chain corresponds to 1400–1456 (GRVDGLELRKLGEVSWEEEAEISGSSARYDVALSEQGEFKLLSEEKVPWDQVVMTSL). The interval 1407-1446 (LRKLGEVSWEEEAEISGSSARYDVALSEQGEFKLLSEEKV) is interacts with and activates NS3 protease. The helical intramembrane region spans 1457 to 1477 (ALVGAAIHPFALLLVLAGWLF). The Cytoplasmic segment spans residues 1478 to 2157 (HVKGARRSGD…RNALSMMPEA (680 aa)). The Peptidase S7 domain maps to 1485-1665 (SGDVLWDIPT…EVKEEGKEEL (181 aa)). Residues histidine 1537, aspartate 1561, and serine 1622 each act as charge relay system; for serine protease NS3 activity in the active site. The region spanning 1669–1825 (PTMLKKGMTT…HSNGEIEDVQ (157 aa)) is the Helicase ATP-binding domain. The interval 1673 to 1676 (KKGM) is important for RNA-binding. 1682–1689 (FHPGAGKT) is an ATP binding site. The DEAH box signature appears at 1773 to 1776 (DEAH). Positions 1820-1997 (EIEDVQTDIP…VRGGMVAPLY (178 aa)) constitute a Helicase C-terminal domain. Lysine 1877 is subject to N6-acetyllysine; by host. The disordered stretch occupies residues 1942–1961 (AAQRRGRIGRNPNRDGDSYY). Residues 2158-2178 (MTIAMLFILAGLLTSGMVIFF) traverse the membrane as a helical segment. Residues 2179 to 2186 (MSPKGISR) lie on the Lumenal side of the membrane. Residues 2187–2207 (MSMAMGTMAGCGYLMFLGGVK) constitute an intramembrane region (helical). Topologically, residues 2208-2209 (PT) are lumenal. A helical transmembrane segment spans residues 2210 to 2230 (HISYIMLIFFVLMVVVIPEPG). Over 2231-2241 (QQRSIQDNQVA) the chain is Cytoplasmic. The chain crosses the membrane as a helical span at residues 2242-2262 (YLIIGILTLVSVVAANELGML). Over 2263–2293 (EKTKEDLFGKKDLIPSSASPWSWPDLDLKPG) the chain is Lumenal. The segment at residues 2294-2314 (AAWTVYVGIVTMLSPMLHHWI) is an intramembrane region (helical). Over 2315-2360 (KVEYGNLSLSGIAQSASVLSFMDKGIPFMKMNISVIILLVSGWNSI) the chain is Lumenal. The helical transmembrane segment at 2361 to 2380 (TVMPLLCGIGCAMLHWSLIL) threads the bilayer. Residues 2381-2421 (PGIKAQQSKLAQRRVFHGVAKNPVVDGNPTVDIEEAPEMPA) are Cytoplasmic-facing. Residues 2422–2442 (LYEKKLALYLLLALSLASVAM) traverse the membrane as a helical segment. Over 2443 to 2445 (CRT) the chain is Lumenal. The helical transmembrane segment at 2446 to 2466 (PFSLAEGIVLASAALGPLIEG) threads the bilayer. Topologically, residues 2467-3411 (NTSLLWNGPM…DADLQPGELI (945 aa)) are cytoplasmic. Residues 2507–2771 (GRANGKTLGE…DVILPIGTRS (265 aa)) form the mRNA cap 0-1 NS5-type MT domain. Residue serine 2562 participates in S-adenosyl-L-methionine binding. Phosphoserine is present on serine 2562. Lysine 2567 serves as the catalytic For 2'-O-MTase activity. S-adenosyl-L-methionine is bound by residues glycine 2592, tryptophan 2593, threonine 2610, leucine 2611, aspartate 2637, and isoleucine 2638. The For 2'-O-MTase activity role is filled by aspartate 2652. Isoleucine 2653 is a binding site for S-adenosyl-L-methionine. Residues lysine 2688 and glutamate 2724 each act as for 2'-O-MTase activity in the active site. Tyrosine 2726 lines the S-adenosyl-L-methionine pocket. Positions 2878–2911 (RKIMKVVNRWLFRHLAREKNPRLCTKEEFIAKVR) match the Nuclear localization signal motif. Zn(2+)-binding residues include glutamate 2945, histidine 2949, cysteine 2954, and cysteine 2957. A RdRp catalytic domain is found at 3035 to 3187 (GGFYADDTAG…RPIDDRFGLA (153 aa)). The Zn(2+) site is built by histidine 3222, cysteine 3238, and cysteine 3357.

It in the N-terminal section; belongs to the class I-like SAM-binding methyltransferase superfamily. mRNA cap 0-1 NS5-type methyltransferase family. As to quaternary structure, homodimer. Interacts (via N-terminus) with host EXOC1 (via C-terminus); this interaction results in EXOC1 degradation through the proteasome degradation pathway. In terms of assembly, forms heterodimers with envelope protein E in the endoplasmic reticulum and Golgi. Homodimer; in the endoplasmic reticulum and Golgi. Interacts with protein prM. Interacts with non-structural protein 1. As to quaternary structure, homodimer; Homohexamer when secreted. Interacts with envelope protein E. In terms of assembly, interacts (via N-terminus) with serine protease NS3. Forms a heterodimer with serine protease NS3. May form homooligomers. As to quaternary structure, forms a heterodimer with NS2B. Interacts with non-structural protein 2A (via N-terminus). Interacts with NS4B. Interacts with unphosphorylated RNA-directed RNA polymerase NS5; this interaction stimulates RNA-directed RNA polymerase NS5 guanylyltransferase activity. NS3 interacts with host PDCD6IP; this interaction contributes to virion release. In terms of assembly, interacts with serine protease NS3. Homodimer. Interacts with host STAT2; this interaction prevents the establishment of cellular antiviral state. Interacts with serine protease NS3. Interacts with host TRIM23; this interaction leads to NS5 ubiquitination. In terms of processing, specific enzymatic cleavages in vivo yield mature proteins. The nascent capsid protein C contains a C-terminal hydrophobic domain that act as a signal sequence for translocation of prM into the lumen of the ER. Mature capsid protein C is cleaved at a site upstream of this hydrophobic domain by NS3. prM is cleaved in post-Golgi vesicles by a host furin, releasing the mature small envelope protein M, and peptide pr. Non-structural protein 2A-alpha, a C-terminally truncated form of non-structural protein 2A, results from partial cleavage by NS3. Specific enzymatic cleavages in vivo yield mature proteins peptide 2K acts as a signal sequence and is removed from the N-terminus of NS4B by the host signal peptidase in the ER lumen. Signal cleavage at the 2K-4B site requires a prior NS3 protease-mediated cleavage at the 4A-2K site. Cleaved in post-Golgi vesicles by a host furin, releasing the mature small envelope protein M, and peptide pr. This cleavage is incomplete as up to 30% of viral particles still carry uncleaved prM. Post-translationally, N-glycosylated. In terms of processing, N-glycosylated. The excreted form is glycosylated and this is required for efficient secretion of the protein from infected cells. Polyubiquitinated; ubiquitination is probably mediated by host TRIM23 and is prerequisite for NS5-STAT2 interaction. NS5 is not ISGylated or sumoylated. Post-translationally, acetylated by host KAT5. Acetylation modulates NS3 RNA-binding and unwinding activities and plays an important positive role for viral replication. In terms of processing, phosphorylated on serines residues. This phosphorylation may trigger NS5 nuclear localization.

It is found in the virion. Its subcellular location is the host nucleus. The protein localises to the host cytoplasm. It localises to the host perinuclear region. The protein resides in the secreted. It is found in the virion membrane. Its subcellular location is the host endoplasmic reticulum membrane. It carries out the reaction Selective hydrolysis of -Xaa-Xaa-|-Yaa- bonds in which each of the Xaa can be either Arg or Lys and Yaa can be either Ser or Ala.. It catalyses the reaction RNA(n) + a ribonucleoside 5'-triphosphate = RNA(n+1) + diphosphate. The enzyme catalyses a ribonucleoside 5'-triphosphate + H2O = a ribonucleoside 5'-diphosphate + phosphate + H(+). The catalysed reaction is ATP + H2O = ADP + phosphate + H(+). It carries out the reaction a 5'-end (5'-triphosphoguanosine)-ribonucleoside in mRNA + S-adenosyl-L-methionine = a 5'-end (N(7)-methyl 5'-triphosphoguanosine)-ribonucleoside in mRNA + S-adenosyl-L-homocysteine. It catalyses the reaction a 5'-end (N(7)-methyl 5'-triphosphoguanosine)-ribonucleoside in mRNA + S-adenosyl-L-methionine = a 5'-end (N(7)-methyl 5'-triphosphoguanosine)-(2'-O-methyl-ribonucleoside) in mRNA + S-adenosyl-L-homocysteine + H(+). Its function is as follows. Plays a role in virus budding by binding to the cell membrane and gathering the viral RNA into a nucleocapsid that forms the core of a mature virus particle. During virus entry, may induce genome penetration into the host cytoplasm after hemifusion induced by the surface proteins. Can migrate to the cell nucleus where it modulates host functions. Inhibits RNA silencing by interfering with host Dicer. In terms of biological role, prevents premature fusion activity of envelope proteins in trans-Golgi by binding to envelope protein E at pH6.0. After virion release in extracellular space, gets dissociated from E dimers. Functionally, acts as a chaperone for envelope protein E during intracellular virion assembly by masking and inactivating envelope protein E fusion peptide. prM is the only viral peptide matured by host furin in the trans-Golgi network probably to avoid catastrophic activation of the viral fusion activity in acidic Golgi compartment prior to virion release. prM-E cleavage is inefficient, and many virions are only partially matured. These uncleaved prM would play a role in immune evasion. Its function is as follows. May play a role in virus budding. Exerts cytotoxic effects by activating a mitochondrial apoptotic pathway through M ectodomain. May display a viroporin activity. Binds to host cell surface receptor and mediates fusion between viral and cellular membranes. Envelope protein is synthesized in the endoplasmic reticulum in the form of heterodimer with protein prM. They play a role in virion budding in the ER, and the newly formed immature particle is covered with 60 spikes composed of heterodimer between precursor prM and envelope protein E. The virion is transported to the Golgi apparatus where the low pH causes dissociation of PrM-E heterodimers and formation of E homodimers. prM-E cleavage is inefficient, and many virions are only partially matured. These uncleaved prM would play a role in immune evasion. In terms of biological role, involved in immune evasion, pathogenesis and viral replication. Once cleaved off the polyprotein, is targeted to three destinations: the viral replication cycle, the plasma membrane and the extracellular compartment. Essential for viral replication. Required for formation of the replication complex and recruitment of other non-structural proteins to the ER-derived membrane structures. Excreted as a hexameric lipoparticle that plays a role against host immune response. Antagonizing the complement function. Binds to the host macrophages and dendritic cells. Inhibits signal transduction originating from Toll-like receptor 3 (TLR3). Functionally, component of the viral RNA replication complex that functions in virion assembly and antagonizes the host immune response. Its function is as follows. Required cofactor for the serine protease function of NS3. May have membrane-destabilizing activity and form viroporins. Displays three enzymatic activities: serine protease, NTPase and RNA helicase. NS3 serine protease, in association with NS2B, performs its autocleavage and cleaves the polyprotein at dibasic sites in the cytoplasm: C-prM, NS2A-NS2B, NS2B-NS3, NS3-NS4A, NS4A-2K and NS4B-NS5. NS3 RNA helicase binds RNA and unwinds dsRNA in the 3' to 5' direction. Also plays a role in virus assembly. In terms of biological role, regulates the ATPase activity of the NS3 helicase activity. NS4A allows NS3 helicase to conserve energy during unwinding. Functionally, functions as a signal peptide for NS4B and is required for the interferon antagonism activity of the latter. Its function is as follows. Induces the formation of ER-derived membrane vesicles where the viral replication takes place. Inhibits interferon (IFN)-induced host STAT1 phosphorylation and nuclear translocation, thereby preventing the establishment of cellular antiviral state by blocking the IFN-alpha/beta pathway. Replicates the viral (+) and (-) RNA genome, and performs the capping of genomes in the cytoplasm. NS5 methylates viral RNA cap at guanine N-7 and ribose 2'-O positions. Besides its role in RNA genome replication, also prevents the establishment of cellular antiviral state by blocking the interferon-alpha/beta (IFN-alpha/beta) signaling pathway. IFN-I induces binding of NS5 to host IFN-activated transcription factor STAT2, preventing its transcriptional activity. Host TRIM23 is the E3 ligase that interacts with and polyubiquitinates NS5 to promote its binding to STAT2 and trigger IFN-I signaling inhibition. The polypeptide is Genome polyprotein (Yellow fever virus (isolate Ivory Coast/1999) (YFV)).